A 131-amino-acid polypeptide reads, in one-letter code: Lysosomal enzyme trafficking factor (131 aa).

The next 2 membrane-spanning stretches (helical) occupy residues 8–28 (MGWI…YYVF) and 66–86 (LPFW…FLFL).

It belongs to the LYSET family.

The protein localises to the golgi apparatus membrane. In terms of biological role, required for mannose-6-phosphate-dependent trafficking of lysosomal enzymes. LYSET bridges GlcNAc-1-phosphate transferase (GNPTAB), to the membrane-bound transcription factor site-1 protease (MBTPS1), thus allowing proteolytic activation of the GNPTAB. GNPTAB is involved in the regulation of M6P-dependent Golgi-to-lysosome trafficking of lysosomal enzymes. LYSET is thus an essential factor for maturation and delivery of lysosomal hydrolases. This is Lysosomal enzyme trafficking factor (lyset-b) from Xenopus laevis (African clawed frog).